A 157-amino-acid chain; its full sequence is MFDVLMYLFETYIHTEAELRVDQDKLEQDLTDAGFEREDIYNALLWLEKLADYQEGLAEPMQLASDPLSMRIYTPEECERLDASCRGFLLFLEQIQVLNLETREMVIERVLALDNAEFELDDLKWVILMVLFNIPGCENAYQQMEELLFEVNEGMLH.

It belongs to the Smg family.

The chain is Protein Smg from Shigella boydii serotype 4 (strain Sb227).